The following is a 117-amino-acid chain: NADH-quinone oxidoreductase subunit A (117 aa).

The next 3 membrane-spanning stretches (helical) occupy residues 4 to 24, 64 to 84, and 86 to 106; these read WIGV…GMLT, LMFV…VSFV, and LGLA…LGLW.

The protein belongs to the complex I subunit 3 family. NDH-1 is composed of 14 different subunits. Subunits NuoA, H, J, K, L, M, N constitute the membrane sector of the complex.

Its subcellular location is the cell membrane. It catalyses the reaction a quinone + NADH + 5 H(+)(in) = a quinol + NAD(+) + 4 H(+)(out). NDH-1 shuttles electrons from NADH, via FMN and iron-sulfur (Fe-S) centers, to quinones in the respiratory chain. The immediate electron acceptor for the enzyme in this species is believed to be a menaquinone. Couples the redox reaction to proton translocation (for every two electrons transferred, four hydrogen ions are translocated across the cytoplasmic membrane), and thus conserves the redox energy in a proton gradient. In Desulforamulus reducens (strain ATCC BAA-1160 / DSM 100696 / MI-1) (Desulfotomaculum reducens), this protein is NADH-quinone oxidoreductase subunit A.